Reading from the N-terminus, the 545-residue chain is Bifunctional purine biosynthesis protein PurH (545 aa).

Positions 1-150 (MTNTNRPIRR…KNHATVAIVT (150 aa)) constitute an MGS-like domain.

This sequence belongs to the PurH family.

It carries out the reaction (6R)-10-formyltetrahydrofolate + 5-amino-1-(5-phospho-beta-D-ribosyl)imidazole-4-carboxamide = 5-formamido-1-(5-phospho-D-ribosyl)imidazole-4-carboxamide + (6S)-5,6,7,8-tetrahydrofolate. The catalysed reaction is IMP + H2O = 5-formamido-1-(5-phospho-D-ribosyl)imidazole-4-carboxamide. The protein operates within purine metabolism; IMP biosynthesis via de novo pathway; 5-formamido-1-(5-phospho-D-ribosyl)imidazole-4-carboxamide from 5-amino-1-(5-phospho-D-ribosyl)imidazole-4-carboxamide (10-formyl THF route): step 1/1. It functions in the pathway purine metabolism; IMP biosynthesis via de novo pathway; IMP from 5-formamido-1-(5-phospho-D-ribosyl)imidazole-4-carboxamide: step 1/1. In Bifidobacterium longum (strain NCC 2705), this protein is Bifunctional purine biosynthesis protein PurH.